The chain runs to 337 residues: tRNA N(3)-cytidine methyltransferase METTL2 (337 aa).

Residues Trp66, Tyr70, Gly140, Asp165, Asp191, and Ile212 each coordinate S-adenosyl-L-methionine.

It belongs to the methyltransferase superfamily. METL family. As to quaternary structure, monomer.

The protein resides in the cytoplasm. The catalysed reaction is cytidine(32) in tRNA(Thr) + S-adenosyl-L-methionine = N(3)-methylcytidine(32) in tRNA(Thr) + S-adenosyl-L-homocysteine + H(+). It carries out the reaction cytidine(32) in tRNA(Arg)(CCU) + S-adenosyl-L-methionine = N(3)-methylcytidine(32) in tRNA(Arg)(CCU) + S-adenosyl-L-homocysteine + H(+). S-adenosyl-L-methionine-dependent methyltransferase that mediates N(3)-methylcytidine modification of residue 32 of the tRNA anticodon loop of tRNA(Thr)(UGU) and tRNA(Arg)(CCU). N(3)-methylcytidine methylation by mettl2 requires the N6-threonylcarbamoylation of tRNA (t6A37) by the EKC/KEOPS complex as prerequisite. In Xenopus tropicalis (Western clawed frog), this protein is tRNA N(3)-cytidine methyltransferase METTL2 (mettl2).